The sequence spans 190 residues: Protein GrpE (190 aa).

Positions 1–33 (MSEQEKDQNNAEPQVETVEEQQAAAAAEAVEPT) are disordered. Positions 11 to 32 (AEPQVETVEEQQAAAAAEAVEP) are enriched in low complexity.

Belongs to the GrpE family. As to quaternary structure, homodimer.

It localises to the cytoplasm. Its function is as follows. Participates actively in the response to hyperosmotic and heat shock by preventing the aggregation of stress-denatured proteins, in association with DnaK and GrpE. It is the nucleotide exchange factor for DnaK and may function as a thermosensor. Unfolded proteins bind initially to DnaJ; upon interaction with the DnaJ-bound protein, DnaK hydrolyzes its bound ATP, resulting in the formation of a stable complex. GrpE releases ADP from DnaK; ATP binding to DnaK triggers the release of the substrate protein, thus completing the reaction cycle. Several rounds of ATP-dependent interactions between DnaJ, DnaK and GrpE are required for fully efficient folding. This Alcanivorax borkumensis (strain ATCC 700651 / DSM 11573 / NCIMB 13689 / SK2) protein is Protein GrpE.